The chain runs to 216 residues: 3-keto-L-gulonate-6-phosphate decarboxylase UlaD (216 aa).

Asp11 serves as a coordination point for substrate. The Mg(2+) site is built by Glu33 and Asp62. Arg192 contacts substrate.

This sequence belongs to the HPS/KGPDC family. KGPDC subfamily. Homodimer. Mg(2+) serves as cofactor.

It catalyses the reaction 3-dehydro-L-gulonate 6-phosphate + H(+) = L-xylulose 5-phosphate + CO2. It participates in cofactor degradation; L-ascorbate degradation; D-xylulose 5-phosphate from L-ascorbate: step 2/4. In terms of biological role, catalyzes the decarboxylation of 3-keto-L-gulonate-6-P into L-xylulose-5-P. Is involved in the anaerobic L-ascorbate utilization. In Shigella dysenteriae serotype 1 (strain Sd197), this protein is 3-keto-L-gulonate-6-phosphate decarboxylase UlaD.